Consider the following 551-residue polypeptide: Probable NADH-ubiquinone oxidoreductase C947.15c, mitochondrial (551 aa).

The transit peptide at 1–35 (MSVSKARLQSVVRLSRTVPYSKTMVRSFHVSCAVK) directs the protein to the mitochondrion. 92-122 (NIVVLGSGWGAVAAIKNLDPSLYNITLVSPR) serves as a coordination point for FAD. 255–291 (LHITVVGGGPTGMEFAAEMQDFIDNDVKDMFPELQKD) contributes to the NAD(+) binding site.

It belongs to the NADH dehydrogenase family.

It is found in the mitochondrion. The enzyme catalyses a quinone + NADH + H(+) = a quinol + NAD(+). The catalysed reaction is a ubiquinone + NADH + H(+) = a ubiquinol + NAD(+). Functionally, catalyzes the oxidation of NADH. In Schizosaccharomyces pombe (strain 972 / ATCC 24843) (Fission yeast), this protein is Probable NADH-ubiquinone oxidoreductase C947.15c, mitochondrial.